Consider the following 1438-residue polypeptide: MAMTEQQKFKVLADQIKISNQLDAEILNSGELTRIDVSNKNRTWEFHITLPQFLAHEDYLLFIHAIEQEFKDIANVTCRFTVTNGTNQDEHAIKYFGHCIDQTALSPKVKGQLKQKKLIMSGKVLKVMVSNDIERNHFDKACNGSLIKAFRNCGFDIDKIIFETNDNDQEQNLASLEAHIQEEDEQSARLATEKLEKMKAEKAKQQDNNESAVDKCQIGKPIQIENIKPIESIIEEEFKVAIEGVIFDINLKELKSGRHIVEIKVTDYTDSLVLKMFTRKNKDDLEHFKALSVGKWVRAQGRIEEDTFIRDLVMMMSDIEEIKKATKKDKAEEKRVEFHLHTAMSQMDGIPNIGAYVKQAADWGHPAIAVTDHNVVQAFPDAHAAAEKHGIKMIYGMEGMLVDDGAPIAYKPQDVVLKDATYVVFDVETTGLSNQYNKIIELAAVKVHNGEIIDKFERFSNPHERLSETIINLTHITDDMLVDAPEIEEVLTEFKEWVGDAIFVAHNASFDMGFIDTGYERLGFGPSTNGVIDTLELSRTINTEYGKHGLNFLAKKYGVELTQHHRAIYDTEATAYIFIKMVQQMKELGVLNHNEINKKLSNQDAYKRARPSHVTLIVQNQQGLKNLFKIVSASLVKYFYRTPRIPRSLLDEYREGLLVGTACDEGELFTAVMQKDQSQVEKIAKYYDFIEIQPPALYQDLIDRELIRDTETLHEIYQRLIHAGDTAGIPVIATGNAHYLFEHDGIARKILIASQPGNPLNRSTLPEAHFRTTDEMLNEFHFLGEEKAHEIVVKNTNELADRIERVVPIKDELYTPRMEGANEEIRELSYANARKLYGEDLPQIVIDRLEKELKSIIGNGFAVIYLISQRLVKKSLDDGYLVGSRGSVGSSFVATMTEITEVNPLPPHYICPNCKTSEFFNDGSVGSGFDLPDKTCETCGAPLIKEGQDIPFETFLGFKGDKVPDIDLNFSGEYQPNAHNYTKVLFGEDKVFRAGTIGTVAEKTAFGYVKGYLNDQGIHKRGAEIDRLVKGCTGVKRTTGQHPGGIIVVPDYMDIYDFTPIQYPADDQNSAWMTTHFDFHSIHDNVLKLDILGHDDPTMIRMLQDLSGIDPKTIPVDDKEVMQIFSTPESLGVTEDEILCKTGTFGVPEFGTGFVRQMLEDTKPTTFSELVQISGLSHGTDVWLGNAQELIKTGICDLSSVIGCRDDIMVYLMYAGLEPSMAFKIMESVRKGKGLTEEMIETMKENEVPDWYLDSCLKIKYMFPKAHAAAYVLMAVRIAYFKVHHPLYYYASYFTIRASDFDLITMIKDKTSIRNTVKDMYSRYMDLGKKEKDVLTVLEIMNEMAHRGYRMQPISLEKSQAFEFIIEGDTLIPPFISVPGLGENVAKRIVEARDDGPFLSKEDLNKKAGLSQKIIEYLDELGSLPNLPDKAQLSIFDM.

Positions 422–578 (YVVFDVETTG…YDTEATAYIF (157 aa)) constitute an Exonuclease domain.

This sequence belongs to the DNA polymerase type-C family. PolC subfamily.

It is found in the cytoplasm. It catalyses the reaction DNA(n) + a 2'-deoxyribonucleoside 5'-triphosphate = DNA(n+1) + diphosphate. Functionally, required for replicative DNA synthesis. This DNA polymerase also exhibits 3' to 5' exonuclease activity. This is DNA polymerase III PolC-type from Staphylococcus aureus (strain bovine RF122 / ET3-1).